A 233-amino-acid chain; its full sequence is Serine-rich 25 kDa antigen protein (233 aa).

A disordered region spans residues 35–219; the sequence is KNEASPEKLE…DNNNLDAASS (185 aa). The span at 38–53 shows a compositional bias: basic and acidic residues; sequence ASPEKLEEAEEKEKSS. The span at 61 to 71 shows a compositional bias: acidic residues; sequence SNEDNEDDEDE. 10 tandem repeats follow at residues 82–93, 102–113, 114–125, 126–137, 138–149, 150–161, 162–169, 170–177, 178–185, and 186–193. Residues 82-161 form a 6 X 12 AA tandem repeats of S-S-S-D-K-P-D-N-K-P-E-A region; it reads SSSDKPDNKP…SDKPDNKPEA (80 aa). Residues 83–159 show a composition bias toward basic and acidic residues; it reads SSDKPDNKPE…SSSDKPDNKP (77 aa). Residues 160–192 are compositionally biased toward polar residues; sequence EASSTNKPEASSTNKPEASSTNKPEASSTNKPE. Positions 162-193 are 4 X 8 AA tandem repeats of S-S-T-N-K-P-E-A; sequence SSTNKPEASSTNKPEASSTNKPEASSTNKPEA. The span at 193–219 shows a compositional bias: low complexity; the sequence is ASSTSNSNDKSGSSSDNDNNNLDAASS.

Post-translationally, phosphorylated on serine residue(s). In terms of processing, O-glycosylated; glycans consist of single N-acetylglucosamine residues. O-acylated; acyl group is probably palmitate, not myristate.

The protein localises to the cell membrane. Functionally, plays a role in the adhesion to host cells. Involved in the adhesion to host apoptotic cells thereby facilitating their phagocytosis. In Entamoeba histolytica (strain ATCC 30459 / HM-1:IMSS / ABRM), this protein is Serine-rich 25 kDa antigen protein.